A 174-amino-acid polypeptide reads, in one-letter code: MAEENQNPTPEEAAIVEAGAVSQLLTENGFSHESLERDHSGIEIIKVDADLLIPLCTALYAFGFNYLQCQGAYDLGPGKELVSFYHLLKVGDNVTDPEEVRVKVFLPRENPVVPSVYWIWKGADWQERESYDMYGIVYEGHPNLKRILMPEDWIGWPLRKDYVSPDFYELQDAY.

It belongs to the complex I 30 kDa subunit family. NDH-1 can be composed of about 15 different subunits; different subcomplexes with different compositions have been identified which probably have different functions.

The protein localises to the cellular thylakoid membrane. The enzyme catalyses a plastoquinone + NADH + (n+1) H(+)(in) = a plastoquinol + NAD(+) + n H(+)(out). It carries out the reaction a plastoquinone + NADPH + (n+1) H(+)(in) = a plastoquinol + NADP(+) + n H(+)(out). Its function is as follows. NDH-1 shuttles electrons from an unknown electron donor, via FMN and iron-sulfur (Fe-S) centers, to quinones in the respiratory and/or the photosynthetic chain. The immediate electron acceptor for the enzyme in this species is believed to be plastoquinone. Couples the redox reaction to proton translocation, and thus conserves the redox energy in a proton gradient. Cyanobacterial NDH-1 also plays a role in inorganic carbon-concentration. The sequence is that of NAD(P)H-quinone oxidoreductase subunit J from Picosynechococcus sp. (strain ATCC 27264 / PCC 7002 / PR-6) (Agmenellum quadruplicatum).